A 207-amino-acid chain; its full sequence is U1 small nuclear ribonucleoprotein C (207 aa).

The Matrin-type zinc-finger motif lies at 4–36; the sequence is YYCDYCDTYLTHDSPSVRKQHNAGYKHKANVRI. Pro residues-rich tracts occupy residues 105–115 and 122–131; these read PPQGYMPPPGV and PGAPLPPPPQ. Positions 105-207 are disordered; the sequence is PPQGYMPPPG…PSAESPESNE (103 aa). Residues 132–144 show a composition bias toward low complexity; it reads NGILRPPGMAPIP. The span at 162 to 183 shows a compositional bias: pro residues; the sequence is GPPPNYNGLPPPPPYHTNPAAP. Over residues 184 to 207 the composition is skewed to low complexity; that stretch reads PSGNFNNPNLNNPNPSAESPESNE.

Belongs to the U1 small nuclear ribonucleoprotein C family. As to quaternary structure, U1 snRNP is composed of the 7 core Sm proteins B/B', D1, D2, D3, E, F and G that assemble in a heptameric protein ring on the Sm site of the small nuclear RNA to form the core snRNP, and at least 3 U1 snRNP-specific proteins U1-70K, U1-A and U1-C. U1-C interacts with U1 snRNA and the 5' splice-site region of the pre-mRNA.

The protein localises to the nucleus. Functionally, component of the spliceosomal U1 snRNP, which is essential for recognition of the pre-mRNA 5' splice-site and the subsequent assembly of the spliceosome. U1-C is directly involved in initial 5' splice-site recognition for both constitutive and regulated alternative splicing. The interaction with the 5' splice-site seems to precede base-pairing between the pre-mRNA and the U1 snRNA. Stimulates commitment or early (E) complex formation by stabilizing the base pairing of the 5' end of the U1 snRNA and the 5' splice-site region. This is U1 small nuclear ribonucleoprotein C from Arabidopsis thaliana (Mouse-ear cress).